The following is a 60-amino-acid chain: Large ribosomal subunit protein bL33 (60 aa).

Belongs to the bacterial ribosomal protein bL33 family.

The protein is Large ribosomal subunit protein bL33 of Chlorobaculum tepidum (strain ATCC 49652 / DSM 12025 / NBRC 103806 / TLS) (Chlorobium tepidum).